Consider the following 254-residue polypeptide: Protein odd-skipped-related 2 (254 aa).

3 C2H2-type zinc fingers span residues 124–146 (FICK…ERTH), 152–174 (YSCD…KYIH), and 180–202 (FKCE…RATH).

Belongs to the Odd C2H2-type zinc-finger protein family.

The protein localises to the nucleus. May function as transcription regulator. Required for morphogenesis and function of the digestive tract. This chain is Protein odd-skipped-related 2, found in Caenorhabditis elegans.